Here is a 397-residue protein sequence, read N- to C-terminus: Acetate kinase (397 aa).

A Mg(2+)-binding site is contributed by asparagine 8. An ATP-binding site is contributed by lysine 15. Residue arginine 89 participates in substrate binding. The active-site Proton donor/acceptor is the aspartate 146. Residues 206-210, 281-283, and 329-333 contribute to the ATP site; these read HLGNG, DLR, and GVGEN. Mg(2+) is bound at residue glutamate 382.

Belongs to the acetokinase family. In terms of assembly, homodimer. Requires Mg(2+) as cofactor. Mn(2+) serves as cofactor.

The protein localises to the cytoplasm. The catalysed reaction is acetate + ATP = acetyl phosphate + ADP. It participates in metabolic intermediate biosynthesis; acetyl-CoA biosynthesis; acetyl-CoA from acetate: step 1/2. Catalyzes the formation of acetyl phosphate from acetate and ATP. Can also catalyze the reverse reaction. The polypeptide is Acetate kinase (Bacillus cereus (strain ATCC 10987 / NRS 248)).